Here is a 207-residue protein sequence, read N- to C-terminus: Proteasome subunit beta (207 aa).

A propeptide spans 1 to 7 (removed in mature form; by autocatalysis); it reads MVEAFKG. Thr-8 acts as the Nucleophile in catalysis.

This sequence belongs to the peptidase T1B family. In terms of assembly, the 20S proteasome core is composed of 14 alpha and 14 beta subunits that assemble into four stacked heptameric rings, resulting in a barrel-shaped structure. The two inner rings, each composed of seven catalytic beta subunits, are sandwiched by two outer rings, each composed of seven alpha subunits. The catalytic chamber with the active sites is on the inside of the barrel. Has a gated structure, the ends of the cylinder being occluded by the N-termini of the alpha-subunits. Is capped at one or both ends by the proteasome regulatory ATPase, PAN.

The protein localises to the cytoplasm. It catalyses the reaction Cleavage of peptide bonds with very broad specificity.. The formation of the proteasomal ATPase PAN-20S proteasome complex, via the docking of the C-termini of PAN into the intersubunit pockets in the alpha-rings, triggers opening of the gate for substrate entry. Interconversion between the open-gate and close-gate conformations leads to a dynamic regulation of the 20S proteasome proteolysis activity. Functionally, component of the proteasome core, a large protease complex with broad specificity involved in protein degradation. This chain is Proteasome subunit beta, found in Methanothrix thermoacetophila (strain DSM 6194 / JCM 14653 / NBRC 101360 / PT) (Methanosaeta thermophila).